A 201-amino-acid polypeptide reads, in one-letter code: 3-isopropylmalate dehydratase small subunit (201 aa).

Belongs to the LeuD family. LeuD type 1 subfamily. Heterodimer of LeuC and LeuD.

The catalysed reaction is (2R,3S)-3-isopropylmalate = (2S)-2-isopropylmalate. Its pathway is amino-acid biosynthesis; L-leucine biosynthesis; L-leucine from 3-methyl-2-oxobutanoate: step 2/4. Its function is as follows. Catalyzes the isomerization between 2-isopropylmalate and 3-isopropylmalate, via the formation of 2-isopropylmaleate. The polypeptide is 3-isopropylmalate dehydratase small subunit (Micrococcus luteus (strain ATCC 4698 / DSM 20030 / JCM 1464 / CCM 169 / CCUG 5858 / IAM 1056 / NBRC 3333 / NCIMB 9278 / NCTC 2665 / VKM Ac-2230) (Micrococcus lysodeikticus)).